The primary structure comprises 700 residues: Peroxisomal acyl-coenzyme A oxidase 3 (700 aa).

Ala-2 carries the N-acetylalanine modification. At Thr-281 the chain carries Phosphothreonine. Positions 698–700 (SKL) match the Microbody targeting signal motif.

It belongs to the acyl-CoA oxidase family. It depends on FAD as a cofactor.

Its subcellular location is the peroxisome. It catalyses the reaction a 2,3-saturated acyl-CoA + O2 = a (2E)-enoyl-CoA + H2O2. It carries out the reaction (2S)-pristanoyl-CoA + O2 = (2E)-pristenoyl-CoA + H2O2. The enzyme catalyses tetracosanoyl-CoA + O2 = (2E)-tetracosenoyl-CoA + H2O2. The catalysed reaction is hexadecanoyl-CoA + O2 = (2E)-hexadecenoyl-CoA + H2O2. It catalyses the reaction hexadecanedioyl-CoA + O2 = (2E)-hexadecenedioyl-CoA + H2O2. The protein operates within lipid metabolism; peroxisomal fatty acid beta-oxidation. Oxidizes the CoA-esters of 2-methyl-branched fatty acids. The polypeptide is Peroxisomal acyl-coenzyme A oxidase 3 (ACOX3) (Homo sapiens (Human)).